Reading from the N-terminus, the 492-residue chain is Polyamine oxidase 5 (492 aa).

FAD is bound by residues E55, R63, V244, and E431. The short motif at 490–492 (SRL) is the Microbody targeting signal element.

This sequence belongs to the flavin monoamine oxidase family. The cofactor is FAD. Widely expressed.

The protein localises to the peroxisome. The enzyme catalyses spermine + O2 + H2O = 3-aminopropanal + spermidine + H2O2. It carries out the reaction norspermine + O2 + H2O = norspermidine + 3-aminopropanal + H2O2. The catalysed reaction is thermospermine + O2 + H2O = 3-aminopropanal + spermidine + H2O2. It functions in the pathway amine and polyamine degradation; spermine degradation. Functionally, flavoenzyme involved in polyamine back-conversion. Catalyzes the oxidation of the secondary amino group of polyamines, such as spermine. Substrate preference is spermine &gt; thermospermine &gt; norspermine. No activity detected when putrescine, spermidine or N(1)-acetylspermidine are used as substrates. Plays an important role in the regulation of polyamine intracellular concentration. May play a role in producing hydrogen peroxide during seed germination. In Oryza sativa subsp. japonica (Rice), this protein is Polyamine oxidase 5.